Here is a 128-residue protein sequence, read N- to C-terminus: Large ribosomal subunit protein bL17 (128 aa).

Belongs to the bacterial ribosomal protein bL17 family. In terms of assembly, part of the 50S ribosomal subunit. Contacts protein L32.

In Streptococcus sanguinis (strain SK36), this protein is Large ribosomal subunit protein bL17.